Reading from the N-terminus, the 1035-residue chain is Ephrin type-A receptor 6 (1035 aa).

The signal sequence occupies residues 1 to 22 (MGGCEVREFLLQFGFFLPLLTA). Topologically, residues 23 to 549 (WTGDCSHVSN…MAAEQGQILV (527 aa)) are extracellular. Positions 33-211 (QVVLLDTSTV…FYKKCPFTVR (179 aa)) constitute an Eph LBD domain. Fibronectin type-III domains lie at 330–440 (PPSA…TDQD) and 441–536 (APSL…TGDE). 3 N-linked (GlcNAc...) asparagine glycosylation sites follow: N342, N396, and N409. Residues 550-570 (IATAAVGGFTLLVILTLFFLI) form a helical membrane-spanning segment. Topologically, residues 571 to 1035 (TGRCQWYIKA…MHIQEKGFHV (465 aa)) are cytoplasmic. Phosphotyrosine; by autocatalysis is present on residues Y605 and Y611. The Protein kinase domain occupies 630–943 (IRIERVIGAG…RNPSALHTLV (314 aa)). ATP contacts are provided by residues 636-644 (IGAGEFGEV) and K662. The active-site Proton acceptor is D797. Y830 and Y977 each carry phosphotyrosine; by autocatalysis. The SAM domain maps to 960-1024 (PLFVTVGDWL…VSSIQTLRLH (65 aa)). The PDZ-binding signature appears at 1033–1035 (FHV).

This sequence belongs to the protein kinase superfamily. Tyr protein kinase family. Ephrin receptor subfamily. Heterotetramer upon binding of the ligand. The heterotetramer is composed of an ephrin dimer and a receptor dimer. Oligomerization is probably required to induce biological responses. Interacts (via SAM domain) with ANKS1A (via SAM domain). As to expression, brain.

The protein resides in the membrane. The enzyme catalyses L-tyrosyl-[protein] + ATP = O-phospho-L-tyrosyl-[protein] + ADP + H(+). Its function is as follows. Receptor tyrosine kinase which binds promiscuously GPI-anchored ephrin-A family ligands residing on adjacent cells, leading to contact-dependent bidirectional signaling into neighboring cells. The signaling pathway downstream of the receptor is referred to as forward signaling while the signaling pathway downstream of the ephrin ligand is referred to as reverse signaling. This chain is Ephrin type-A receptor 6 (Epha6), found in Rattus norvegicus (Rat).